Reading from the N-terminus, the 535-residue chain is MAFPQTPNRLIRPRRTSRGIAISAGGLAVLLGALDTYVVVSIVTDIMRDVGIAVNQIQRVTPIITGYLLGYIAAMPLLGRASDRFGRKLLIQISLAGFALGSVITALATNLDVLVAGRVIQGAASGALLPVTLALAADLWATHKRAAVLGGVGAAQELGAVLGPIYGIFVVWLFHHWQAVFWVNVPLALIAMVLIHISLPPRVRTEEPQRVDVTGGLLLALALGLATIGLYNAEPDGKQVLPEYGPPLIIGAVIAAVAFLVWERFARTRLLDPAGVRFRPFLIALLVSLVTGGALMVTLVNVELFGQGVLGLDQDEAVFLLARFLIALPVGALLGGWIATRVGDRAVTAVGLLIAAGGFYLIAQWPADVLESRHDLGFVSLPTLDTDLAIAGFGLGLVIAPLTSAALRVVPAAQHGIASAAVVVARMIGMLIGIAALSAWGLYRFNQYLKEQLAALPPAPADFPGGQMAGQMMRLRTATVQAYVLQYGEIFAITAGLCVFGAVLGLFIAGRREHAEESADAVDGVSNARDRAPSA.

The Cytoplasmic portion of the chain corresponds to 1–18; that stretch reads MAFPQTPNRLIRPRRTSR. A helical membrane pass occupies residues 19–39; the sequence is GIAISAGGLAVLLGALDTYVV. At 40–60 the chain is on the periplasmic side; that stretch reads VSIVTDIMRDVGIAVNQIQRV. Residues 61–82 form a helical membrane-spanning segment; that stretch reads TPIITGYLLGYIAAMPLLGRAS. Residues 83-86 lie on the Cytoplasmic side of the membrane; that stretch reads DRFG. Residues 87 to 107 traverse the membrane as a helical segment; sequence RKLLIQISLAGFALGSVITAL. Residues 108 to 111 are Periplasmic-facing; sequence ATNL. Residues 112 to 136 form a helical membrane-spanning segment; sequence DVLVAGRVIQGAASGALLPVTLALA. Residues 137-145 are Cytoplasmic-facing; the sequence is ADLWATHKR. The helical transmembrane segment at 146-167 threads the bilayer; that stretch reads AAVLGGVGAAQELGAVLGPIYG. Residues 168–177 lie on the Periplasmic side of the membrane; sequence IFVVWLFHHW. A helical transmembrane segment spans residues 178–198; it reads QAVFWVNVPLALIAMVLIHIS. Topologically, residues 199-212 are cytoplasmic; it reads LPPRVRTEEPQRVD. Residues 213–230 traverse the membrane as a helical segment; sequence VTGGLLLALALGLATIGL. Topologically, residues 231–243 are periplasmic; that stretch reads YNAEPDGKQVLPE. The helical transmembrane segment at 244-263 threads the bilayer; the sequence is YGPPLIIGAVIAAVAFLVWE. Over 264-278 the chain is Cytoplasmic; that stretch reads RFARTRLLDPAGVRF. A helical transmembrane segment spans residues 279-300; it reads RPFLIALLVSLVTGGALMVTLV. The Periplasmic segment spans residues 301–320; that stretch reads NVELFGQGVLGLDQDEAVFL. A run of 2 helical transmembrane segments spans residues 321 to 343 and 344 to 364; these read LARF…TRVG and DRAV…LIAQ. At 365–384 the chain is on the periplasmic side; the sequence is WPADVLESRHDLGFVSLPTL. Residues 373 to 382 are beta-hairpin; sequence RHDLGFVSLP. The helical transmembrane segment at 385-407 threads the bilayer; that stretch reads DTDLAIAGFGLGLVIAPLTSAAL. Topologically, residues 408–415 are cytoplasmic; the sequence is RVVPAAQH. The helical transmembrane segment at 416-440 threads the bilayer; it reads GIASAAVVVARMIGMLIGIAALSAW. The Periplasmic portion of the chain corresponds to 441 to 487; the sequence is GLYRFNQYLKEQLAALPPAPADFPGGQMAGQMMRLRTATVQAYVLQY. Residues 488 to 507 form a helical membrane-spanning segment; sequence GEIFAITAGLCVFGAVLGLF. Topologically, residues 508–535 are cytoplasmic; that stretch reads IAGRREHAEESADAVDGVSNARDRAPSA.

The protein belongs to the major facilitator superfamily. P55 (TC 2.A.1.3.34) family.

The protein localises to the cell inner membrane. Its function is as follows. In association with lipoprotein LprG transports triacylglycerides (TAG) across the inner cell membrane, probably transfering them to lipoprotein LprG in the periplasm. TAG probably regulates lipid metabolism and growth regulation and plays a structural role in the outer membrane. Mutagenesis and molecular modeling suggests TAG (and maybe other lipids) enters the central cavity of the P55 transporter from within the cell inner membrane via clefts on the cytoplasmic face of P55 between TM5-TM8 and TM2-TM11. From there the lipid is probably transferred to the hydrophobic cavity of LprG. The lprG-MHAS_02167/C731_2107 operon complements the vancomycin sensitivity of an M.smegmatis knockout of the same operon. Probably required with LprG for normal surface localization of lipoarabinomannan (LAM). The polypeptide is Triacylglyceride transporter MHAS_02168/C731_2106 (Mycolicibacterium hassiacum (strain DSM 44199 / CIP 105218 / JCM 12690 / 3849) (Mycobacterium hassiacum)).